The sequence spans 62 residues: MTLAFQLAVFALIATSSILLISVPVVFASPDGWSSNKNVIFSGTSLWIGLVFLVGILNSLIS.

2 helical membrane passes run 8–28 (AVFA…VVFA) and 41–61 (FSGT…NSLI).

This sequence belongs to the PsbZ family. In terms of assembly, PSII is composed of 1 copy each of membrane proteins PsbA, PsbB, PsbC, PsbD, PsbE, PsbF, PsbH, PsbI, PsbJ, PsbK, PsbL, PsbM, PsbT, PsbY, PsbZ, Psb30/Ycf12, at least 3 peripheral proteins of the oxygen-evolving complex and a large number of cofactors. It forms dimeric complexes.

The protein resides in the plastid. Its subcellular location is the chloroplast thylakoid membrane. In terms of biological role, may control the interaction of photosystem II (PSII) cores with the light-harvesting antenna, regulates electron flow through the 2 photosystem reaction centers. PSII is a light-driven water plastoquinone oxidoreductase, using light energy to abstract electrons from H(2)O, generating a proton gradient subsequently used for ATP formation. This Coffea arabica (Arabian coffee) protein is Photosystem II reaction center protein Z.